A 295-amino-acid polypeptide reads, in one-letter code: Methionine aminopeptidase (295 aa).

His63 provides a ligand contact to substrate. 3 residues coordinate a divalent metal cation: Asp83, Asp94, and His154. His162 is a substrate binding site. Residues Glu188 and Glu281 each contribute to the a divalent metal cation site.

Belongs to the peptidase M24A family. Methionine aminopeptidase archaeal type 2 subfamily. Monomer. It depends on Fe(2+) as a cofactor. Co(2+) serves as cofactor. Ni(2+) is required as a cofactor. The cofactor is Mn(2+).

It carries out the reaction Release of N-terminal amino acids, preferentially methionine, from peptides and arylamides.. In terms of biological role, removes the N-terminal methionine from nascent proteins. The N-terminal methionine is often cleaved when the second residue in the primary sequence is small and uncharged (Met-Ala-, Cys, Gly, Pro, Ser, Thr, or Val). This Thermococcus onnurineus (strain NA1) protein is Methionine aminopeptidase.